We begin with the raw amino-acid sequence, 910 residues long: Protein translocase subunit SecA (910 aa).

ATP-binding positions include glutamine 86, 104–108 (GEGKT), and aspartate 499. Cysteine 894, cysteine 896, cysteine 905, and histidine 906 together coordinate Zn(2+).

The protein belongs to the SecA family. As to quaternary structure, monomer and homodimer. Part of the essential Sec protein translocation apparatus which comprises SecA, SecYEG and auxiliary proteins SecDF-YajC and YidC. Zn(2+) is required as a cofactor.

The protein resides in the cell inner membrane. It localises to the cytoplasm. The catalysed reaction is ATP + H2O + cellular proteinSide 1 = ADP + phosphate + cellular proteinSide 2.. In terms of biological role, part of the Sec protein translocase complex. Interacts with the SecYEG preprotein conducting channel. Has a central role in coupling the hydrolysis of ATP to the transfer of proteins into and across the cell membrane, serving both as a receptor for the preprotein-SecB complex and as an ATP-driven molecular motor driving the stepwise translocation of polypeptide chains across the membrane. This is Protein translocase subunit SecA from Rickettsia bellii (strain RML369-C).